The chain runs to 477 residues: Ankyrin repeat, SAM and basic leucine zipper domain-containing protein 1 (477 aa).

The interval 1 to 24 is disordered; sequence MATSALRGLAVAGGGESSESEDDG. Phosphoserine occurs at positions 17, 18, and 20. ANK repeat units lie at residues 46-76, 80-109, 112-146, 150-179, 183-212, and 216-245; these read EKKEKFKKALTTGDVSLVQELLDSGIISVDA, YGWTPLMYAASVANAELVRVLLDRGANASF, DKQTILITACSAHGSEEQILKCVELLLSRNADPNV, RLMTPIMYAARDGHTQVVALLVASGAEVNT, NGYTALTWAARQGHKSIVLKLLELGANKML, and DGKLPSEIAKRNKHHEIFNLLSFTLNPLEG. One can recognise an SAM domain in the interval 274–336; it reads SYAEFGDLEV…KILAALKELE (63 aa).

In terms of assembly, interacts with DDX4, PIWIL1, RANBP9 and TDRD1.

Its subcellular location is the cytoplasm. Functionally, plays a central role during spermatogenesis by repressing transposable elements and preventing their mobilization, which is essential for the germline integrity. Acts via the piRNA metabolic process, which mediates the repression of transposable elements during meiosis by forming complexes composed of piRNAs and Piwi proteins and governs the methylation and subsequent repression of transposons. Its association with pi-bodies suggests a participation in the primary piRNAs metabolic process. Required prior to the pachytene stage to facilitate the production of multiple types of piRNAs, including those associated with repeats involved in the regulation of retrotransposons. May act by mediating protein-protein interactions during germ cell maturation. The protein is Ankyrin repeat, SAM and basic leucine zipper domain-containing protein 1 (ASZ1) of Saimiri boliviensis boliviensis (Bolivian squirrel monkey).